A 377-amino-acid chain; its full sequence is Nitric oxide reductase FlRd-NAD(+) reductase (377 aa).

It belongs to the FAD-dependent oxidoreductase family. FAD serves as cofactor.

Its subcellular location is the cytoplasm. It carries out the reaction 2 reduced [nitric oxide reductase rubredoxin domain] + NAD(+) + H(+) = 2 oxidized [nitric oxide reductase rubredoxin domain] + NADH. The protein operates within nitrogen metabolism; nitric oxide reduction. Its function is as follows. One of at least two accessory proteins for anaerobic nitric oxide (NO) reductase. Reduces the rubredoxin moiety of NO reductase. This Shigella dysenteriae serotype 1 (strain Sd197) protein is Nitric oxide reductase FlRd-NAD(+) reductase.